The primary structure comprises 525 residues: Cytochrome P450 703A2 (525 aa).

The helical transmembrane segment at Pro-3 to Leu-23 threads the bilayer. Cys-455 is a binding site for heme.

It belongs to the cytochrome P450 family. The cofactor is heme.

It is found in the membrane. The catalysed reaction is dodecanoate + reduced [NADPH--hemoprotein reductase] + O2 = 7-hydroxydodecanoate + oxidized [NADPH--hemoprotein reductase] + H2O + H(+). In terms of biological role, involved in pollen exine and anther epicuticular layer development. Catalyzes the in-chain hydroxylation of lauric acid (C12:0) preferentially on position 7, generating 7-hydroxylated lauric acid. Does not possess activity with other fatty acids (C14:0, C16:0, C16:1, and C18:0). Participates in a conserved pathway of in-chain hydroxylation of lauric acid required for anther cuticle and pollen exine formation. Directly regulated by TDR, a known regulator of tapetum programmed cell death (PCD) and pollen exine formation. The polypeptide is Cytochrome P450 703A2 (Oryza sativa subsp. japonica (Rice)).